A 143-amino-acid chain; its full sequence is Large ribosomal subunit protein uL15 (143 aa).

The segment at 1–57 (MQLNNLKPAAGSKHAKRRVGRGIGSGLGKTAGRGHKGQKSRSGGFHKVGFEGGQMPL) is disordered. Positions 21–31 (RGIGSGLGKTA) are enriched in gly residues.

Belongs to the universal ribosomal protein uL15 family. In terms of assembly, part of the 50S ribosomal subunit.

Binds to the 23S rRNA. The polypeptide is Large ribosomal subunit protein uL15 (Ralstonia nicotianae (strain ATCC BAA-1114 / GMI1000) (Ralstonia solanacearum)).